The chain runs to 191 residues: Fe/S biogenesis protein NfuA (191 aa).

[4Fe-4S] cluster-binding residues include Cys-149 and Cys-152.

It belongs to the NfuA family. In terms of assembly, homodimer. [4Fe-4S] cluster is required as a cofactor.

Its function is as follows. Involved in iron-sulfur cluster biogenesis. Binds a 4Fe-4S cluster, can transfer this cluster to apoproteins, and thereby intervenes in the maturation of Fe/S proteins. Could also act as a scaffold/chaperone for damaged Fe/S proteins. The chain is Fe/S biogenesis protein NfuA from Escherichia coli O139:H28 (strain E24377A / ETEC).